Consider the following 406-residue polypeptide: Probable tRNA sulfurtransferase (406 aa).

The THUMP domain maps to 60 to 162 (PEAKARLQDT…PGAALLEVER (103 aa)). ATP is bound by residues 180-181 (LL), 205-206 (HF), Arg262, Gly284, and Gln293.

Belongs to the ThiI family.

The protein resides in the cytoplasm. The catalysed reaction is [ThiI sulfur-carrier protein]-S-sulfanyl-L-cysteine + a uridine in tRNA + 2 reduced [2Fe-2S]-[ferredoxin] + ATP + H(+) = [ThiI sulfur-carrier protein]-L-cysteine + a 4-thiouridine in tRNA + 2 oxidized [2Fe-2S]-[ferredoxin] + AMP + diphosphate. It catalyses the reaction [ThiS sulfur-carrier protein]-C-terminal Gly-Gly-AMP + S-sulfanyl-L-cysteinyl-[cysteine desulfurase] + AH2 = [ThiS sulfur-carrier protein]-C-terminal-Gly-aminoethanethioate + L-cysteinyl-[cysteine desulfurase] + A + AMP + 2 H(+). The protein operates within cofactor biosynthesis; thiamine diphosphate biosynthesis. Functionally, catalyzes the ATP-dependent transfer of a sulfur to tRNA to produce 4-thiouridine in position 8 of tRNAs, which functions as a near-UV photosensor. Also catalyzes the transfer of sulfur to the sulfur carrier protein ThiS, forming ThiS-thiocarboxylate. This is a step in the synthesis of thiazole, in the thiamine biosynthesis pathway. The sulfur is donated as persulfide by IscS. The polypeptide is Probable tRNA sulfurtransferase (Thermus thermophilus (strain ATCC 27634 / DSM 579 / HB8)).